An 87-amino-acid chain; its full sequence is Xibalbin-2 (87 aa).

A signal peptide spans 1 to 25; it reads MKGVCTRKVLYFFMAVILFVAIVAS. A propeptide spanning residues 26-45 is cleaved from the precursor; sequence EDTENRNPAMAMPLQRMEQE.

It belongs to the xibalbin-2 family. In terms of processing, contains 5 disulfide bonds. As to expression, expressed by the venom gland. Not found in the whole body.

The protein localises to the secreted. Functionally, probable neurotoxin. Moderately inhibits voltage-gated potassium channels (Kv1.1/KCNA1, Kv1.2/KCNA2, Kv1.3/KCNA3, and Kv1.6/KCNA6, with the highest toxicity against Kv1.6 (73.2% inhibition at 1 uM)) and weakly inhibits sodium channels (Nav1.4/SCN4A). Does not activate protein kinase A type II (PKA-II) and MAP kinase Erk1/2 in sensory neurons. Does not show cytotoxic activity. Does not have an impact on Ca2+, cAMP, and NO signaling in the cell types analyzed. Does not interfere with the adhesion of leukocytes to endothelial cells. Moderately inhibits voltage-gated potassium channels (Kv1.1/KCNA1, Kv1.2/KCNA2, Kv1.3/KCNA3, and Kv1.6/KCNA6, with the highest toxicity against Kv1.6 (75.9% inhibition at 1 uM)). Does not activate protein kinase A type II (PKA-II) and MAP kinase Erk1/2 in sensory neurons. Does not show cytotoxic activity. Does not have an impact on Ca2+, cAMP, and NO signaling in the cell types analyzed. Does not interfere with the adhesion of leukocytes to endothelial cells. The polypeptide is Xibalbin-2 (Xibalbanus tulumensis (Blind cave remipede)).